The primary structure comprises 124 residues: Acidic phospholipase A2 (124 aa).

Intrachain disulfides connect Cys26–Cys117, Cys28–Cys44, Cys43–Cys97, Cys49–Cys124, Cys50–Cys90, Cys57–Cys83, and Cys77–Cys88. Ca(2+)-binding residues include Tyr27, Gly29, and Gly31. The active site involves His47. Asp48 serves as a coordination point for Ca(2+). Glu89 is an active-site residue.

This sequence belongs to the phospholipase A2 family. Group II subfamily. D49 sub-subfamily. Requires Ca(2+) as cofactor. Expressed by the venom gland.

Its subcellular location is the secreted. It catalyses the reaction a 1,2-diacyl-sn-glycero-3-phosphocholine + H2O = a 1-acyl-sn-glycero-3-phosphocholine + a fatty acid + H(+). Its function is as follows. Snake venom phospholipase A2 (PLA2) that inhibits collagen- and ADP-induced platelet aggregation. PLA2 catalyzes the calcium-dependent hydrolysis of the 2-acyl groups in 3-sn-phosphoglycerides. This Bothrops jararaca (Jararaca) protein is Acidic phospholipase A2.